The chain runs to 207 residues: High frequency lysogenization protein HflD homolog (207 aa).

The protein belongs to the HflD family.

The protein localises to the cytoplasm. It localises to the cell inner membrane. The sequence is that of High frequency lysogenization protein HflD homolog from Methylococcus capsulatus (strain ATCC 33009 / NCIMB 11132 / Bath).